Here is a 156-residue protein sequence, read N- to C-terminus: Ribosomal RNA large subunit methyltransferase H (156 aa).

Residues leucine 73, glycine 104, and 123–128 (ISSMTL) each bind S-adenosyl-L-methionine.

It belongs to the RNA methyltransferase RlmH family. In terms of assembly, homodimer.

Its subcellular location is the cytoplasm. The enzyme catalyses pseudouridine(1915) in 23S rRNA + S-adenosyl-L-methionine = N(3)-methylpseudouridine(1915) in 23S rRNA + S-adenosyl-L-homocysteine + H(+). Its function is as follows. Specifically methylates the pseudouridine at position 1915 (m3Psi1915) in 23S rRNA. The sequence is that of Ribosomal RNA large subunit methyltransferase H from Burkholderia vietnamiensis (strain G4 / LMG 22486) (Burkholderia cepacia (strain R1808)).